The primary structure comprises 401 residues: Subtilisin-like protease 7 (401 aa).

A signal peptide spans 1-20 (MGFITKAIPLALAAASVING). A propeptide spanning residues 21–119 (AEILETRAGV…IERDARVQIN (99 aa)) is cleaved from the precursor. The Inhibitor I9 domain occupies 36-118 (KYIVVMNDGM…YIERDARVQI (83 aa)). Residue asparagine 58 is glycosylated (N-linked (GlcNAc...) asparagine). The Peptidase S8 domain maps to 129 to 401 (SWGLARVGSR…SKLINNGSGM (273 aa)). Active-site charge relay system residues include aspartate 161 and histidine 193. Asparagine 223 and asparagine 253 each carry an N-linked (GlcNAc...) asparagine glycan. Catalysis depends on serine 347, which acts as the Charge relay system. An N-linked (GlcNAc...) asparagine glycan is attached at asparagine 397.

Belongs to the peptidase S8 family.

It is found in the secreted. In terms of biological role, secreted subtilisin-like serine protease with keratinolytic activity that contributes to pathogenicity. The polypeptide is Subtilisin-like protease 7 (SUB7) (Trichophyton tonsurans (Scalp ringworm fungus)).